The sequence spans 809 residues: Poly(A) polymerase (809 aa).

The segment at 1 to 50 (MNKNGGPPVANITTSSTTITSTTTTQAKSQLPSSLSVNNLHTTQGSTDQP) is disordered. Residues 12 to 25 (ITTSSTTITSTTTT) are compositionally biased toward low complexity. A compositionally biased stretch (polar residues) spans 26–50 (QAKSQLPSSLSVNNLHTTQGSTDQP). Residues 133-135 (FGS), 146-148 (DID), Asp200, Lys262, Tyr271, and 280-281 (GV) each bind ATP. 3 residues coordinate Mg(2+): Asp146, Asp148, and Asp200. Disordered regions lie at residues 529-760 (FVKD…QQIQ) and 785-809 (ISSSSETSQSKPPPKKPTISIIRGN). Over residues 530–540 (VKDEGPEEPVK) the composition is skewed to basic and acidic residues. Positions 572–655 (SPITTNINST…TPPTTTTINS (84 aa)) are enriched in low complexity. The span at 656-665 (VQPPSAQPTE) shows a compositional bias: polar residues. Positions 666 to 706 (NGSSTSNSPTSTSINNTALPPNPTTNSESTIETTITLPTTL) are enriched in low complexity. Positions 707-735 (ESQTSTLKDSNEISTNGTAVATEPTITSP) are enriched in polar residues. 2 stretches are compositionally biased toward low complexity: residues 736–760 (SVNINESSTSTSTTTTTTVTEQQIQ) and 785–794 (ISSSSETSQS).

The protein belongs to the poly(A) polymerase family. Mg(2+) is required as a cofactor. The cofactor is Mn(2+).

It is found in the nucleus. The catalysed reaction is RNA(n) + ATP = RNA(n)-3'-adenine ribonucleotide + diphosphate. Polymerase that creates the 3'-poly(A) tail of mRNA's. May acquire specificity through interaction with a cleavage and polyadenylation factor. The polypeptide is Poly(A) polymerase (papA) (Dictyostelium discoideum (Social amoeba)).